Consider the following 348-residue polypeptide: Beta-hexosaminidase (348 aa).

Substrate contacts are provided by residues Asp62, Arg70, Arg134, and 164–165 (KH). The Proton donor/acceptor role is filled by His177. Asp249 acts as the Nucleophile in catalysis.

Belongs to the glycosyl hydrolase 3 family. NagZ subfamily.

Its subcellular location is the cytoplasm. It carries out the reaction Hydrolysis of terminal non-reducing N-acetyl-D-hexosamine residues in N-acetyl-beta-D-hexosaminides.. The protein operates within cell wall biogenesis; peptidoglycan recycling. Plays a role in peptidoglycan recycling by cleaving the terminal beta-1,4-linked N-acetylglucosamine (GlcNAc) from peptide-linked peptidoglycan fragments, giving rise to free GlcNAc, anhydro-N-acetylmuramic acid and anhydro-N-acetylmuramic acid-linked peptides. In Histophilus somni (strain 2336) (Haemophilus somnus), this protein is Beta-hexosaminidase.